We begin with the raw amino-acid sequence, 431 residues long: Tryptophan synthase beta chain (431 aa).

Lys109 is subject to N6-(pyridoxal phosphate)lysine.

This sequence belongs to the TrpB family. In terms of assembly, tetramer of two alpha and two beta chains. Pyridoxal 5'-phosphate is required as a cofactor.

The enzyme catalyses (1S,2R)-1-C-(indol-3-yl)glycerol 3-phosphate + L-serine = D-glyceraldehyde 3-phosphate + L-tryptophan + H2O. It functions in the pathway amino-acid biosynthesis; L-tryptophan biosynthesis; L-tryptophan from chorismate: step 5/5. In terms of biological role, the beta subunit is responsible for the synthesis of L-tryptophan from indole and L-serine. This Deinococcus radiodurans (strain ATCC 13939 / DSM 20539 / JCM 16871 / CCUG 27074 / LMG 4051 / NBRC 15346 / NCIMB 9279 / VKM B-1422 / R1) protein is Tryptophan synthase beta chain.